A 459-amino-acid chain; its full sequence is Argininosuccinate lyase (459 aa).

This sequence belongs to the lyase 1 family. Argininosuccinate lyase subfamily.

The protein resides in the cytoplasm. The catalysed reaction is 2-(N(omega)-L-arginino)succinate = fumarate + L-arginine. It participates in amino-acid biosynthesis; L-arginine biosynthesis; L-arginine from L-ornithine and carbamoyl phosphate: step 3/3. This Staphylococcus aureus (strain MRSA252) protein is Argininosuccinate lyase.